We begin with the raw amino-acid sequence, 382 residues long: Chaperone protein DnaJ 2 (382 aa).

Positions 4–68 (DYYGLLGVSK…DKRRIVDLGG (65 aa)) constitute a J domain. The segment at 132-214 (GVTKQVTVDT…CMGDGRIRAR (83 aa)) adopts a CR-type zinc-finger fold. C145, C148, C162, C165, C188, C191, C202, and C205 together coordinate Zn(2+). 4 CXXCXGXG motif repeats span residues 145-152 (CDRCQGKG), 162-169 (CDTCGGRG), 188-195 (CPTCRGVG), and 202-209 (CQQCMGDG).

It belongs to the DnaJ family. As to quaternary structure, homodimer. Interacts with RNase J. Zn(2+) serves as cofactor.

It is found in the cytoplasm. In terms of biological role, participates actively in the response to hyperosmotic and heat shock by preventing the aggregation of stress-denatured proteins and by disaggregating proteins, also in an autonomous, DnaK-independent fashion. Unfolded proteins bind initially to DnaJ; upon interaction with the DnaJ-bound protein, DnaK hydrolyzes its bound ATP, resulting in the formation of a stable complex. GrpE releases ADP from DnaK; ATP binding to DnaK triggers the release of the substrate protein, thus completing the reaction cycle. Several rounds of ATP-dependent interactions between DnaJ, DnaK and GrpE are required for fully efficient folding. Also involved, together with DnaK and GrpE, in the DNA replication of plasmids through activation of initiation proteins. Inhibits the beta-lactamase and RNase activity of RNase J. In Mycobacterium tuberculosis (strain ATCC 25618 / H37Rv), this protein is Chaperone protein DnaJ 2.